We begin with the raw amino-acid sequence, 468 residues long: Cysteine--tRNA ligase (468 aa).

Cys-36 is a Zn(2+) binding site. A 'HIGH' region motif is present at residues 38–48; it reads PTVYNRSHIGN. Zn(2+) is bound by residues Cys-216, His-241, and Glu-245. The 'KMSKS' region signature appears at 274–278; sequence KMSKS. Lys-277 is a binding site for ATP.

Belongs to the class-I aminoacyl-tRNA synthetase family. As to quaternary structure, monomer. The cofactor is Zn(2+).

It is found in the cytoplasm. The catalysed reaction is tRNA(Cys) + L-cysteine + ATP = L-cysteinyl-tRNA(Cys) + AMP + diphosphate. The protein is Cysteine--tRNA ligase of Parvibaculum lavamentivorans (strain DS-1 / DSM 13023 / NCIMB 13966).